Here is a 65-residue protein sequence, read N- to C-terminus: Large ribosomal subunit protein uL29 (65 aa).

It belongs to the universal ribosomal protein uL29 family.

This Bacteroides fragilis (strain ATCC 25285 / DSM 2151 / CCUG 4856 / JCM 11019 / LMG 10263 / NCTC 9343 / Onslow / VPI 2553 / EN-2) protein is Large ribosomal subunit protein uL29.